Reading from the N-terminus, the 609-residue chain is MDLKAQLKAAVEQAAHQMGMPVDAAIQETPANKPGDYGTPAAFQMAKAAGGNPAQIAAQLAQTVVLPAGIRRVEATGPFLNFFLDAGAFVRGVVERPFELPKREGKVVIEHTSVNPNKELHVGHLRNVVLGDSMARILRAAGHTVEVQNYIDDTGRQAAESLFATQHYGRVWDGVQKYDQWLGEGYVQLNADPQKPELESGIMEIMHKLEAGELRPLVEQTVKAQLQTCFRLGARYDLLNWESDVVGSGFLAQAMNILEGSRYTSRPTEGKYAGAFIMDVSEFMPGLEEPNVVLVRSGGTAMYAAKDIGYQFWKFGLFEGMKFKPFMQDPEGNTIWTSAPDGQPDDERRFGHAQEVINVIDSRQDHPQTVVRSALGVAGEQEKEERSIHLSYAFVTLEGQTISGRKGIAVSADDAMDEAQKRALSVLQGINPDLAAREDAAEIARRIGLGAIRFAMLKAEPTRKIDFRWEQALALNGDTAPYVQYAAVRAANILKKAEEAGYATDGTGADWDALPDIDLVLAKQIAKLPEVAAQAARIHSPHVVAQYALDLATSFNAWYNAKTKQGKPATNVLQSEEGLREARLALIVRLRKAFEDTLDLIGIEIPAAM.

A 'HIGH' region motif is present at residues 114-124 (VNPNKELHVGH).

Belongs to the class-I aminoacyl-tRNA synthetase family. In terms of assembly, monomer.

It is found in the cytoplasm. It catalyses the reaction tRNA(Arg) + L-arginine + ATP = L-arginyl-tRNA(Arg) + AMP + diphosphate. This Deinococcus radiodurans (strain ATCC 13939 / DSM 20539 / JCM 16871 / CCUG 27074 / LMG 4051 / NBRC 15346 / NCIMB 9279 / VKM B-1422 / R1) protein is Arginine--tRNA ligase.